The primary structure comprises 370 residues: Queuine tRNA-ribosyltransferase (370 aa).

The active-site Proton acceptor is the aspartate 89. Residues 89–93 (DSGGF), aspartate 143, glutamine 185, and glycine 212 each bind substrate. The tract at residues 243–249 (GVGTPED) is RNA binding. Aspartate 262 functions as the Nucleophile in the catalytic mechanism. The segment at 267–271 (TRNAR) is RNA binding; important for wobble base 34 recognition. Residues cysteine 300, cysteine 302, cysteine 305, and histidine 331 each coordinate Zn(2+).

Belongs to the queuine tRNA-ribosyltransferase family. As to quaternary structure, homodimer. Within each dimer, one monomer is responsible for RNA recognition and catalysis, while the other monomer binds to the replacement base PreQ1. Zn(2+) serves as cofactor.

The enzyme catalyses 7-aminomethyl-7-carbaguanine + guanosine(34) in tRNA = 7-aminomethyl-7-carbaguanosine(34) in tRNA + guanine. The protein operates within tRNA modification; tRNA-queuosine biosynthesis. Catalyzes the base-exchange of a guanine (G) residue with the queuine precursor 7-aminomethyl-7-deazaguanine (PreQ1) at position 34 (anticodon wobble position) in tRNAs with GU(N) anticodons (tRNA-Asp, -Asn, -His and -Tyr). Catalysis occurs through a double-displacement mechanism. The nucleophile active site attacks the C1' of nucleotide 34 to detach the guanine base from the RNA, forming a covalent enzyme-RNA intermediate. The proton acceptor active site deprotonates the incoming PreQ1, allowing a nucleophilic attack on the C1' of the ribose to form the product. After dissociation, two additional enzymatic reactions on the tRNA convert PreQ1 to queuine (Q), resulting in the hypermodified nucleoside queuosine (7-(((4,5-cis-dihydroxy-2-cyclopenten-1-yl)amino)methyl)-7-deazaguanosine). In Methylobacillus flagellatus (strain ATCC 51484 / DSM 6875 / VKM B-1610 / KT), this protein is Queuine tRNA-ribosyltransferase.